Reading from the N-terminus, the 363-residue chain is S-adenosylmethionine:tRNA ribosyltransferase-isomerase (363 aa).

The protein belongs to the QueA family. In terms of assembly, monomer.

The protein resides in the cytoplasm. It carries out the reaction 7-aminomethyl-7-carbaguanosine(34) in tRNA + S-adenosyl-L-methionine = epoxyqueuosine(34) in tRNA + adenine + L-methionine + 2 H(+). It participates in tRNA modification; tRNA-queuosine biosynthesis. Functionally, transfers and isomerizes the ribose moiety from AdoMet to the 7-aminomethyl group of 7-deazaguanine (preQ1-tRNA) to give epoxyqueuosine (oQ-tRNA). This is S-adenosylmethionine:tRNA ribosyltransferase-isomerase from Brucella abortus (strain S19).